We begin with the raw amino-acid sequence, 520 residues long: Probable E3 ubiquitin-protein ligase rbrA (520 aa).

Acidic residues predominate over residues 1-42; sequence MTDDEMYEDYDVDDDSAEESGNESLDDTEYDDAATQEFDFDE. The interval 1–51 is disordered; sequence MTDDEMYEDYDVDDDSAEESGNESLDDTEYDDAATQEFDFDENQPQRSLGK. The interval 135–354 is TRIAD supradomain; the sequence is GNVSCLICLE…GGYYNCNKYD (220 aa). Zn(2+) contacts are provided by Cys-139, Cys-142, Cys-156, His-158, Cys-161, Cys-164, Cys-184, Cys-189, Cys-228, Cys-233, Cys-250, Cys-252, Cys-257, Cys-260, His-268, Cys-273, Cys-300, and Cys-303. An RING-type 1 zinc finger spans residues 139–189; that stretch reads CLICLEDYPPTQTFALICNHRYCLPCYKNYLEIKVSEGPECIYTPCPAPKC. The IBR-type zinc finger occupies 208 to 273; sequence ERFNNFILKS…EIGDHMPCPC (66 aa). An RING-type 2; atypical zinc finger spans residues 300-333; it reads CPECRSPIEKNGGCMHMTCRKNAGGCGFEFCWLC. Residue Cys-313 is part of the active site. Zn(2+) contacts are provided by Cys-318, Cys-325, Cys-330, Cys-333, His-340, and Cys-350.

Belongs to the RBR family.

The enzyme catalyses [E2 ubiquitin-conjugating enzyme]-S-ubiquitinyl-L-cysteine + [acceptor protein]-L-lysine = [E2 ubiquitin-conjugating enzyme]-L-cysteine + [acceptor protein]-N(6)-ubiquitinyl-L-lysine.. The protein operates within protein modification; protein ubiquitination. Might act as an E3 ubiquitin-protein ligase. Appears to be required for normal cell-type proportioning and cell sorting during multicellular development. In addition to being necessary for a normal percentage of prestalk cells and the organization of the slug, rbrA is also necessary for spore cell viability. The chain is Probable E3 ubiquitin-protein ligase rbrA (rbrA) from Dictyostelium discoideum (Social amoeba).